A 179-amino-acid polypeptide reads, in one-letter code: Large ribosomal subunit protein uL5 (179 aa).

Belongs to the universal ribosomal protein uL5 family. As to quaternary structure, part of the 50S ribosomal subunit; part of the 5S rRNA/L5/L18/L25 subcomplex. Contacts the 5S rRNA and the P site tRNA. Forms a bridge to the 30S subunit in the 70S ribosome.

Its function is as follows. This is one of the proteins that bind and probably mediate the attachment of the 5S RNA into the large ribosomal subunit, where it forms part of the central protuberance. In the 70S ribosome it contacts protein S13 of the 30S subunit (bridge B1b), connecting the 2 subunits; this bridge is implicated in subunit movement. Contacts the P site tRNA; the 5S rRNA and some of its associated proteins might help stabilize positioning of ribosome-bound tRNAs. In Serratia proteamaculans (strain 568), this protein is Large ribosomal subunit protein uL5.